We begin with the raw amino-acid sequence, 412 residues long: Thyroxine-binding globulin (412 aa).

Residues 1-16 (MPLFFSLVLLILGLHC) form the signal peptide. 4 N-linked (GlcNAc...) asparagine glycosylation sites follow: Asn35, Asn98, Asn164, and Asn252. 2 residues coordinate thyroxine: Asn292 and Lys395.

Belongs to the serpin family. As to expression, expressed by the liver and secreted in plasma.

It localises to the secreted. Functionally, major thyroid hormone transport protein in serum. The polypeptide is Thyroxine-binding globulin (SERPINA7) (Ovis aries (Sheep)).